Reading from the N-terminus, the 90-residue chain is Probable Fe(2+)-trafficking protein (90 aa).

Belongs to the Fe(2+)-trafficking protein family.

Its function is as follows. Could be a mediator in iron transactions between iron acquisition and iron-requiring processes, such as synthesis and/or repair of Fe-S clusters in biosynthetic enzymes. The sequence is that of Probable Fe(2+)-trafficking protein from Nitrosococcus oceani (strain ATCC 19707 / BCRC 17464 / JCM 30415 / NCIMB 11848 / C-107).